Consider the following 396-residue polypeptide: S-adenosylmethionine synthase (396 aa).

Histidine 16 serves as a coordination point for ATP. Residue aspartate 18 participates in Mg(2+) binding. Position 44 (glutamate 44) interacts with K(+). Positions 57 and 100 each coordinate L-methionine. Positions 100 to 110 (QSVDIAQGVDR) are flexible loop. ATP is bound by residues 165–167 (DAK), aspartate 240, 246–247 (RK), alanine 263, and lysine 267. An L-methionine-binding site is contributed by aspartate 240. Lysine 271 contributes to the L-methionine binding site.

The protein belongs to the AdoMet synthase family. Homotetramer; dimer of dimers. The cofactor is Mg(2+). K(+) serves as cofactor.

The protein resides in the cytoplasm. It carries out the reaction L-methionine + ATP + H2O = S-adenosyl-L-methionine + phosphate + diphosphate. It participates in amino-acid biosynthesis; S-adenosyl-L-methionine biosynthesis; S-adenosyl-L-methionine from L-methionine: step 1/1. Catalyzes the formation of S-adenosylmethionine (AdoMet) from methionine and ATP. The overall synthetic reaction is composed of two sequential steps, AdoMet formation and the subsequent tripolyphosphate hydrolysis which occurs prior to release of AdoMet from the enzyme. The protein is S-adenosylmethionine synthase of Pseudomonas syringae pv. tomato (strain ATCC BAA-871 / DC3000).